The primary structure comprises 447 residues: Probable glycine dehydrogenase (decarboxylating) subunit 1 (447 aa).

The protein belongs to the GcvP family. N-terminal subunit subfamily. As to quaternary structure, the glycine cleavage system is composed of four proteins: P, T, L and H. In this organism, the P 'protein' is a heterodimer of two subunits.

The catalysed reaction is N(6)-[(R)-lipoyl]-L-lysyl-[glycine-cleavage complex H protein] + glycine + H(+) = N(6)-[(R)-S(8)-aminomethyldihydrolipoyl]-L-lysyl-[glycine-cleavage complex H protein] + CO2. Functionally, the glycine cleavage system catalyzes the degradation of glycine. The P protein binds the alpha-amino group of glycine through its pyridoxal phosphate cofactor; CO(2) is released and the remaining methylamine moiety is then transferred to the lipoamide cofactor of the H protein. The sequence is that of Probable glycine dehydrogenase (decarboxylating) subunit 1 from Sulfolobus acidocaldarius (strain ATCC 33909 / DSM 639 / JCM 8929 / NBRC 15157 / NCIMB 11770).